A 23-amino-acid chain; its full sequence is Aldehyde dehydrogenase (23 aa).

Belongs to the aldehyde dehydrogenase family.

It carries out the reaction an aldehyde + NAD(+) + H2O = a carboxylate + NADH + 2 H(+). The sequence is that of Aldehyde dehydrogenase from Moraxella sp. (strain TAE123).